The following is a 21-amino-acid chain: 78 kDa dihydrolipoyllysine-residue acetyltransferase component of pyruvate dehydrogenase complex (21 aa).

The protein belongs to the 2-oxoacid dehydrogenase family. In terms of assembly, forms a 60-polypeptide structural core. (R)-lipoate serves as cofactor.

It localises to the mitochondrion matrix. The catalysed reaction is N(6)-[(R)-dihydrolipoyl]-L-lysyl-[protein] + acetyl-CoA = N(6)-[(R)-S(8)-acetyldihydrolipoyl]-L-lysyl-[protein] + CoA. Functionally, the pyruvate dehydrogenase complex catalyzes the overall conversion of pyruvate to acetyl-CoA and CO(2). It contains multiple copies of three enzymatic components: pyruvate dehydrogenase (E1), dihydrolipoamide acetyltransferase (E2) and lipoamide dehydrogenase (E3). This is 78 kDa dihydrolipoyllysine-residue acetyltransferase component of pyruvate dehydrogenase complex from Solanum tuberosum (Potato).